A 185-amino-acid chain; its full sequence is Ribosome-recycling factor (185 aa).

The protein belongs to the RRF family.

It is found in the cytoplasm. Responsible for the release of ribosomes from messenger RNA at the termination of protein biosynthesis. May increase the efficiency of translation by recycling ribosomes from one round of translation to another. The protein is Ribosome-recycling factor of Shewanella loihica (strain ATCC BAA-1088 / PV-4).